Reading from the N-terminus, the 500-residue chain is NAD(P)H-quinone oxidoreductase chain 4, chloroplastic (500 aa).

15 helical membrane-spanning segments follow: residues 4 to 24, 31 to 51, 87 to 107, 111 to 131, 134 to 154, 167 to 187, 207 to 227, 242 to 262, 274 to 294, 305 to 325, 330 to 350, 358 to 378, 386 to 406, 416 to 436, and 462 to 482; these read LPWL…IPLF, IIRW…TYTF, IGPI…AWPV, PRLF…LFAS, ILLF…LISM, FILY…SMGL, VVLE…KLPI, HYST…YGLI, SLFS…AALT, IAYS…SMAD, GAIL…FLAG, TLFL…STMF, LALP…GIIT, IVIA…LLSM, and IFIS…PDLV.

This sequence belongs to the complex I subunit 4 family.

The protein resides in the plastid. The protein localises to the chloroplast thylakoid membrane. It catalyses the reaction a plastoquinone + NADH + (n+1) H(+)(in) = a plastoquinol + NAD(+) + n H(+)(out). The catalysed reaction is a plastoquinone + NADPH + (n+1) H(+)(in) = a plastoquinol + NADP(+) + n H(+)(out). The protein is NAD(P)H-quinone oxidoreductase chain 4, chloroplastic of Cycas taitungensis (Prince sago).